Here is a 134-residue protein sequence, read N- to C-terminus: Putative oxidoreductase CatD (134 aa).

Transmembrane regions (helical) follow at residues 5 to 25 (FEIGTLLLRVITGIIFFVHGL), 46 to 66 (FMAYVIAAIELIGGVLVFFGL), 70 to 90 (IVGVLFALTLIGAIITVKLKA), and 91 to 111 (PFMGNAEFDYLLLLTSIHLAL).

This sequence belongs to the DoxX family.

It is found in the cell membrane. Essential for growth and viability in the presence of catechol and probably involved in the detoxification of catechol. The protein is Putative oxidoreductase CatD (catD) of Bacillus subtilis (strain 168).